We begin with the raw amino-acid sequence, 130 residues long: Small ribosomal subunit protein uS9 (130 aa).

This sequence belongs to the universal ribosomal protein uS9 family.

This is Small ribosomal subunit protein uS9 from Bordetella avium (strain 197N).